A 380-amino-acid polypeptide reads, in one-letter code: Queuine tRNA-ribosyltransferase (380 aa).

The active-site Proton acceptor is the Asp95. Substrate is bound by residues 95 to 99 (DSGGF), Asp149, Gln192, and Gly219. The segment at 250 to 256 (GVGSPDS) is RNA binding. Residue Asp269 is the Nucleophile of the active site. Residues 274-278 (TRIGR) form an RNA binding; important for wobble base 34 recognition region. Zn(2+) is bound by residues Cys307, Cys309, Cys312, and His338.

It belongs to the queuine tRNA-ribosyltransferase family. Homodimer. Within each dimer, one monomer is responsible for RNA recognition and catalysis, while the other monomer binds to the replacement base PreQ1. The cofactor is Zn(2+).

It carries out the reaction 7-aminomethyl-7-carbaguanine + guanosine(34) in tRNA = 7-aminomethyl-7-carbaguanosine(34) in tRNA + guanine. It functions in the pathway tRNA modification; tRNA-queuosine biosynthesis. Catalyzes the base-exchange of a guanine (G) residue with the queuine precursor 7-aminomethyl-7-deazaguanine (PreQ1) at position 34 (anticodon wobble position) in tRNAs with GU(N) anticodons (tRNA-Asp, -Asn, -His and -Tyr). Catalysis occurs through a double-displacement mechanism. The nucleophile active site attacks the C1' of nucleotide 34 to detach the guanine base from the RNA, forming a covalent enzyme-RNA intermediate. The proton acceptor active site deprotonates the incoming PreQ1, allowing a nucleophilic attack on the C1' of the ribose to form the product. After dissociation, two additional enzymatic reactions on the tRNA convert PreQ1 to queuine (Q), resulting in the hypermodified nucleoside queuosine (7-(((4,5-cis-dihydroxy-2-cyclopenten-1-yl)amino)methyl)-7-deazaguanosine). The protein is Queuine tRNA-ribosyltransferase of Geobacillus kaustophilus (strain HTA426).